A 545-amino-acid chain; its full sequence is Probable protein kinase UbiB (545 aa).

Residues 124-502 (DFDETPLASA…RRSQGLARFY (379 aa)) form the Protein kinase domain. ATP-binding positions include 130-138 (LASASIAQV) and lysine 153. Aspartate 288 serves as the catalytic Proton acceptor. Transmembrane regions (helical) follow at residues 498-517 (LARF…AILF) and 521-540 (VETI…LLGW).

The protein belongs to the ABC1 family. UbiB subfamily.

It is found in the cell inner membrane. The protein operates within cofactor biosynthesis; ubiquinone biosynthesis [regulation]. Its function is as follows. Is probably a protein kinase regulator of UbiI activity which is involved in aerobic coenzyme Q (ubiquinone) biosynthesis. The protein is Probable protein kinase UbiB of Photobacterium profundum (strain SS9).